Here is a 540-residue protein sequence, read N- to C-terminus: O-phosphoserine--tRNA(Cys) ligase (540 aa).

Substrate is bound by residues 188–190 (HMT), 233–235 (SAS), 275–276 (YY), and Asn319.

It belongs to the class-II aminoacyl-tRNA synthetase family. O-phosphoseryl-tRNA(Cys) synthetase subfamily. As to quaternary structure, homotetramer. Interacts with SepCysS.

It catalyses the reaction tRNA(Cys) + O-phospho-L-serine + ATP = O-phospho-L-seryl-tRNA(Cys) + AMP + diphosphate. Catalyzes the attachment of O-phosphoserine (Sep) to tRNA(Cys). This is O-phosphoserine--tRNA(Cys) ligase from Methanococcus aeolicus (strain ATCC BAA-1280 / DSM 17508 / OCM 812 / Nankai-3).